Here is a 360-residue protein sequence, read N- to C-terminus: MIIWLAELLQPYFSFFRLFEYLSFRAIVSILTALGISLWMGPRMIKRLQMLQIGQVVRNEGPESHFSKRGTPTMGGVMILAAITITVLLWADLTNPYVWAVLAVLLGYGAVGFVDDYRKVVRKNTDGLIARWKYFWQSAIALVVAFALYAHGQDTAATQLVVPFFKDVMPQLGLMYIVLTYFVIVGTSNAVNLTDGLDGLAIMPTVLVAAGFAAIAWATGNVNFANYLHIPYIPHSSELVVVCTAMVGAGLGFLWFNTYPAQVFMGDVGALALGGALGTIAVLVRQEFVLVIMGGVFVMETLSVILQVGSYKLRGQRIFRMAPIHHHYELKGWPEPRVIVRFWVISIVLVLIGLATLKVR.

Helical transmembrane passes span Y21–G41, T73–L93, T94–V114, W132–G152, V168–S188, G199–T219, L239–Y259, V263–L283, F288–V308, and V338–K358.

This sequence belongs to the glycosyltransferase 4 family. MraY subfamily. It depends on Mg(2+) as a cofactor.

The protein localises to the cell inner membrane. The enzyme catalyses UDP-N-acetyl-alpha-D-muramoyl-L-alanyl-gamma-D-glutamyl-meso-2,6-diaminopimeloyl-D-alanyl-D-alanine + di-trans,octa-cis-undecaprenyl phosphate = di-trans,octa-cis-undecaprenyl diphospho-N-acetyl-alpha-D-muramoyl-L-alanyl-D-glutamyl-meso-2,6-diaminopimeloyl-D-alanyl-D-alanine + UMP. Its pathway is cell wall biogenesis; peptidoglycan biosynthesis. In terms of biological role, catalyzes the initial step of the lipid cycle reactions in the biosynthesis of the cell wall peptidoglycan: transfers peptidoglycan precursor phospho-MurNAc-pentapeptide from UDP-MurNAc-pentapeptide onto the lipid carrier undecaprenyl phosphate, yielding undecaprenyl-pyrophosphoryl-MurNAc-pentapeptide, known as lipid I. In Vibrio cholerae serotype O1 (strain ATCC 39541 / Classical Ogawa 395 / O395), this protein is Phospho-N-acetylmuramoyl-pentapeptide-transferase.